We begin with the raw amino-acid sequence, 377 residues long: Caspase-4 (377 aa).

A required for LPS-binding region spans residues Met-1–Asp-59. The propeptide occupies Met-1 to Asp-80. The region spanning Met-1–Asn-91 is the CARD domain. Ala-2 bears the N-acetylalanine mark. Ser-83 carries the phosphoserine modification. Positions Pro-84–Asp-104 are disordered. Active-site residues include His-210 and Cys-258. Residues Ser-271–Asp-289 constitute a propeptide that is removed on maturation. A (Microbial infection) ADP-riboxanated arginine modification is found at Arg-314.

Belongs to the peptidase C14A family. In terms of assembly, heterotetramer that consists of two anti-parallel arranged heterodimers, each one formed by a 20 kDa (Caspase-4 subunit p20) and a 10 kDa (Caspase-4 subunit p10) subunit. Upon direct LPS-binding, forms large homooligomers, resulting in its activation. These oligomers are often referred to as 'non-canonical inflammasomes'. In its precursor form, interacts with TMEM214; this interaction is required for association with the endoplasmic reticulum membrane. Interacts with CASP1. Interacts with NOD2. Interacts with SERPINB1; this interaction regulates CASP4 activity. Heterotetramer that consists of two anti-parallel arranged heterodimers, each one formed by a 20 kDa (Caspase-4 subunit p20) and a 10 kDa (Caspase-4 subunit p10) subunit. As to quaternary structure, (Microbial infection) Interacts with NleF protein from pathogenic E.coli; this interaction leads to enzyme inhibition. In terms of assembly, (Microbial infection) Interacts with cathepsin CTSG; the interaction is promoted by the Td92 surface protein of the periodontal pathogen T.denticola and leads to CASP4 activation. Post-translationally, in response to activation signals, undergoes autoproteolytic cleavage and activation. In terms of processing, (Microbial infection) ADP-riboxanation by S.flexneri OspC3 blocks CASP4 autoprocessing, preventing CASP4 activation and ability to recognize and cleave GSDMD, thereby thwarting the inflammasome/pyroptosis-mediated defense. Widely expressed, including in keratinocytes and colonic and small intestinal epithelial cells (at protein level). Not detected in brain.

The protein localises to the cytoplasm. The protein resides in the cytosol. Its subcellular location is the endoplasmic reticulum membrane. It is found in the mitochondrion. It localises to the inflammasome. The protein localises to the secreted. The catalysed reaction is Strict requirement for Asp at the P1 position. It has a preferred cleavage sequence of Tyr-Val-Ala-Asp-|- but also cleaves at Asp-Glu-Val-Asp-|-.. Activated by homooligomerization induced by direct binding to cytosolic LPS, in a TLR4-independent manner. In addition to LPS, CASP4/CASP11 may also be activated by oxidized phospholipid 1-palmitoyl-2-arachidonoyl- sn-glycero-3-phosphorylcholine, an oxidized phospholipid (oxPAPC), in dendritic cells, promoting adaptive immunity. The role of oxPAPC is however unclear and another report suggests that oxPAPC competes with LPS-binding and inhibits the non-canonical inflammasome in macrophages. Functionally, inflammatory caspase that acts as the effector of the non-canonical inflammasome by mediating lipopolysaccharide (LPS)-induced pyroptosis. Also indirectly activates the NLRP3 and NLRP6 inflammasomes. Acts as a thiol protease that cleaves a tetrapeptide after an Asp residue at position P1: catalyzes cleavage of CGAS, GSDMD and IL18. Effector of the non-canonical inflammasome independently of NLRP3 inflammasome and CASP1: the non-canonical inflammasome promotes pyroptosis through GSDMD cleavage without involving secretion of cytokine IL1B. In the non-canonical inflammasome, CASP4 is activated by direct binding to the lipid A moiety of LPS without the need of an upstream sensor. LPS-binding promotes CASP4 activation and CASP4-mediated cleavage of GSDMD and IL18, followed by IL18 secretion through the GSDMD pore, pyroptosis of infected cells and their extrusion into the gut lumen. Also indirectly promotes secretion of mature cytokines (IL1A and HMGB1) downstream of GSDMD-mediated pyroptosis via activation of the NLRP3 and NLRP6 inflammasomes. Involved in NLRP3-dependent CASP1 activation and IL1B secretion in response to non-canonical activators, such as UVB radiation or cholera enterotoxin. Involved in NLRP6 inflammasome-dependent activation in response to lipoteichoic acid (LTA), a cell-wall component of Gram-positive bacteria, which leads to CASP1 activation and IL1B secretion. Involved in LPS-induced IL6 secretion; this activity may not require caspase enzymatic activity. The non-canonical inflammasome is required for innate immunity to cytosolic, but not vacuolar, bacteria. Plays a crucial role in the restriction of S.typhimurium replication in colonic epithelial cells during infection. Activation of the non-canonical inflammasome in brain endothelial cells can lead to excessive pyroptosis, leading to blood-brain barrier breakdown. Pyroptosis limits bacterial replication, while cytokine secretion promotes the recruitment and activation of immune cells and triggers mucosal inflammation. May also act as an activator of adaptive immunity in dendritic cells, following activation by oxidized phospholipid 1-palmitoyl-2-arachidonoyl- sn-glycero-3-phosphorylcholine, an oxidized phospholipid (oxPAPC). Involved in cell death induced by endoplasmic reticulum stress and by treatment with cytotoxic APP peptides found in Alzheimer's patient brains. Cleavage of GSDMD is not strictly dependent on the consensus cleavage site but depends on an exosite interface on CASP4 that recognizes and binds the Gasdermin-D, C-terminal (GSDMD-CT) part. Catalyzes cleavage and maturation of IL18; IL18 processing also depends of the exosite interface on CASP4. In contrast, it does not directly process IL1B. During non-canonical inflammasome activation, cuts CGAS and may play a role in the regulation of antiviral innate immune activation. In terms of biological role, (Microbial infection) In response to the Td92 surface protein of the periodontal pathogen T.denticola, activated by cathepsin CTSG which leads to production and secretion of IL1A and pyroptosis of gingival fibroblasts. The chain is Caspase-4 from Homo sapiens (Human).